The chain runs to 374 residues: Methylthioribose-1-phosphate isomerase (374 aa).

The active-site Proton donor is the aspartate 251.

It belongs to the eIF-2B alpha/beta/delta subunits family. MtnA subfamily.

The protein resides in the cytoplasm. The protein localises to the nucleus. It carries out the reaction 5-(methylsulfanyl)-alpha-D-ribose 1-phosphate = 5-(methylsulfanyl)-D-ribulose 1-phosphate. It participates in amino-acid biosynthesis; L-methionine biosynthesis via salvage pathway; L-methionine from S-methyl-5-thio-alpha-D-ribose 1-phosphate: step 1/6. In terms of biological role, catalyzes the interconversion of methylthioribose-1-phosphate (MTR-1-P) into methylthioribulose-1-phosphate (MTRu-1-P). This chain is Methylthioribose-1-phosphate isomerase (IDI2), found in Oryza sativa subsp. japonica (Rice).